The primary structure comprises 211 residues: HTH-type transcriptional repressor FabR (211 aa).

An HTH tetR-type domain is found at 10 to 70 (RTRRSLIEAA…TMVDESGLML (61 aa)). A DNA-binding region (H-T-H motif) is located at residues 33 to 52 (SLREVSREAGIAPTSFYRHF).

As to quaternary structure, homodimer.

Its subcellular location is the cytoplasm. Represses the transcription of fabB, involved in unsaturated fatty acid (UFA) biosynthesis. By controlling UFA production, FabR directly influences the physical properties of the membrane bilayer. This is HTH-type transcriptional repressor FabR from Yersinia pseudotuberculosis serotype O:1b (strain IP 31758).